Consider the following 484-residue polypeptide: ETS translocation variant 4 (484 aa).

Residue K6 forms a Glycyl lysine isopeptide (Lys-Gly) (interchain with G-Cter in SUMO2) linkage. Residues 90-115 (SPTTRIKKEPQSPRTDPALSCSRKPP) are disordered. Residue K96 forms a Glycyl lysine isopeptide (Lys-Gly) (interchain with G-Cter in SUMO) linkage. S101 carries the post-translational modification Phosphoserine. K139 is covalently cross-linked (Glycyl lysine isopeptide (Lys-Gly) (interchain with G-Cter in SUMO2)). Phosphoserine occurs at positions 140, 149, and 214. Residues K226 and K260 each participate in a glycyl lysine isopeptide (Lys-Gly) (interchain with G-Cter in SUMO) cross-link. Residue K322 forms a Glycyl lysine isopeptide (Lys-Gly) (interchain with G-Cter in SUMO2) linkage. Positions 341-421 (LQLWQFLVAL…AGERYVYKFV (81 aa)) form a DNA-binding region, ETS.

Belongs to the ETS family. Sumoylated; enhanced upon ERK/MAP kinase pathway activation, it positively regulates the transcriptional activator capacity. Sumoylation at Lys-96 probably requires phosphorylation at Ser-101. Transiently polysumoylated and desumoylated by SENP1. Sumoylation is a prerequisite to polyubiquitination which in turn increases proteasomal-mediated degradation. Probably polyubiquitinated by RNF4 and deubiquitinated by USP2. As to expression, expressed in keratinocytes.

The protein resides in the nucleus. Functionally, transcriptional activator. May play a role in keratinocyte differentiation. In terms of biological role, (Microbial infection) Binds to the enhancer of the adenovirus E1A gene and acts as a transcriptional activator; the core-binding sequence is 5'-[AC]GGA[AT]GT-3'. This chain is ETS translocation variant 4 (ETV4), found in Homo sapiens (Human).